The primary structure comprises 318 residues: Beta-ketoacyl-[acyl-carrier-protein] synthase III (318 aa).

Catalysis depends on residues Cys-112 and His-245. Residues 246–250 (QANLR) are ACP-binding. Residue Asn-275 is part of the active site.

It belongs to the thiolase-like superfamily. FabH family. As to quaternary structure, homodimer.

Its subcellular location is the cytoplasm. It catalyses the reaction malonyl-[ACP] + acetyl-CoA + H(+) = 3-oxobutanoyl-[ACP] + CO2 + CoA. It functions in the pathway lipid metabolism; fatty acid biosynthesis. Its function is as follows. Catalyzes the condensation reaction of fatty acid synthesis by the addition to an acyl acceptor of two carbons from malonyl-ACP. Catalyzes the first condensation reaction which initiates fatty acid synthesis and may therefore play a role in governing the total rate of fatty acid production. Possesses both acetoacetyl-ACP synthase and acetyl transacylase activities. Its substrate specificity determines the biosynthesis of branched-chain and/or straight-chain of fatty acids. The sequence is that of Beta-ketoacyl-[acyl-carrier-protein] synthase III from Blochmanniella floridana.